The primary structure comprises 65 residues: Neurotoxin Bot2 (65 aa).

One can recognise an LCN-type CS-alpha/beta domain in the interval 2–64 (RDAYIAQPEN…VPIRIEGKCH (63 aa)). Intrachain disulfides connect Cys-12/Cys-63, Cys-16/Cys-36, Cys-22/Cys-46, and Cys-26/Cys-48. Phe-65 is modified (phenylalanine amide).

Belongs to the long (4 C-C) scorpion toxin superfamily. Sodium channel inhibitor family. Alpha subfamily. Expressed by the venom gland.

It is found in the secreted. Functionally, binds to sodium channels (Nav) and inhibits the inactivation of the activated channels, thereby blocking neuronal transmission. This is Neurotoxin Bot2 from Buthus occitanus tunetanus (Common European scorpion).